A 243-amino-acid chain; its full sequence is Pyridoxine 5'-phosphate synthase (243 aa).

Residue N9 coordinates 3-amino-2-oxopropyl phosphate. 11–12 (DH) contributes to the 1-deoxy-D-xylulose 5-phosphate binding site. Residue R20 participates in 3-amino-2-oxopropyl phosphate binding. The active-site Proton acceptor is H45. Positions 47 and 52 each coordinate 1-deoxy-D-xylulose 5-phosphate. E72 serves as the catalytic Proton acceptor. T102 serves as a coordination point for 1-deoxy-D-xylulose 5-phosphate. Residue H193 is the Proton donor of the active site. Residues G194 and 215 to 216 (GH) each bind 3-amino-2-oxopropyl phosphate.

The protein belongs to the PNP synthase family. Homooctamer; tetramer of dimers.

Its subcellular location is the cytoplasm. It carries out the reaction 3-amino-2-oxopropyl phosphate + 1-deoxy-D-xylulose 5-phosphate = pyridoxine 5'-phosphate + phosphate + 2 H2O + H(+). It participates in cofactor biosynthesis; pyridoxine 5'-phosphate biosynthesis; pyridoxine 5'-phosphate from D-erythrose 4-phosphate: step 5/5. Its function is as follows. Catalyzes the complicated ring closure reaction between the two acyclic compounds 1-deoxy-D-xylulose-5-phosphate (DXP) and 3-amino-2-oxopropyl phosphate (1-amino-acetone-3-phosphate or AAP) to form pyridoxine 5'-phosphate (PNP) and inorganic phosphate. This Photorhabdus laumondii subsp. laumondii (strain DSM 15139 / CIP 105565 / TT01) (Photorhabdus luminescens subsp. laumondii) protein is Pyridoxine 5'-phosphate synthase.